A 496-amino-acid polypeptide reads, in one-letter code: Probable cytosol aminopeptidase (496 aa).

Positions 266 and 271 each coordinate Mn(2+). The active site involves Lys-278. The Mn(2+) site is built by Asp-289, Asp-348, and Glu-350. The active site involves Arg-352.

Belongs to the peptidase M17 family. Mn(2+) is required as a cofactor.

It is found in the cytoplasm. The enzyme catalyses Release of an N-terminal amino acid, Xaa-|-Yaa-, in which Xaa is preferably Leu, but may be other amino acids including Pro although not Arg or Lys, and Yaa may be Pro. Amino acid amides and methyl esters are also readily hydrolyzed, but rates on arylamides are exceedingly low.. It carries out the reaction Release of an N-terminal amino acid, preferentially leucine, but not glutamic or aspartic acids.. In terms of biological role, presumably involved in the processing and regular turnover of intracellular proteins. Catalyzes the removal of unsubstituted N-terminal amino acids from various peptides. The protein is Probable cytosol aminopeptidase of Azotobacter vinelandii (strain DJ / ATCC BAA-1303).